Reading from the N-terminus, the 128-residue chain is Large ribosomal subunit protein bL17 (128 aa).

The protein belongs to the bacterial ribosomal protein bL17 family. In terms of assembly, part of the 50S ribosomal subunit. Contacts protein L32.

The protein is Large ribosomal subunit protein bL17 of Proteus mirabilis (strain HI4320).